Reading from the N-terminus, the 520-residue chain is 6-phosphofructo-2-kinase/fructose-2,6-bisphosphatase 3 (520 aa).

Residues methionine 1–glutamine 245 form a 6-phosphofructo-2-kinase region. Position 42-50 (glycine 42–tyrosine 50) interacts with ATP. The beta-D-fructose 6-phosphate site is built by arginine 75 and arginine 99. The active site involves aspartate 125. Beta-D-fructose 6-phosphate contacts are provided by threonine 127 and arginine 133. Cysteine 155 is a catalytic residue. Asparagine 164–lysine 169 is a binding site for ATP. Residues lysine 169, arginine 190, and tyrosine 194 each contribute to the beta-D-fructose 6-phosphate site. Residues proline 246–histidine 520 are fructose-2,6-bisphosphatase. Arginine 253 contacts beta-D-fructose 2,6-bisphosphate. Catalysis depends on histidine 254, which acts as the Tele-phosphohistidine intermediate. The beta-D-fructose 2,6-bisphosphate site is built by asparagine 260 and glycine 266. Catalysis depends on glutamate 323, which acts as the Proton donor/acceptor. Beta-D-fructose 2,6-bisphosphate contacts are provided by tyrosine 334, arginine 348, lysine 352, tyrosine 363, glutamine 389, and arginine 393. Tyrosine 345–arginine 348 serves as a coordination point for ATP. ATP is bound by residues glutamine 389–arginine 393 and tyrosine 425. The tract at residues arginine 443–histidine 520 is disordered. Serine 461 is subject to Phosphoserine; by AMPK. Threonine 463 carries the post-translational modification Phosphothreonine. The residue at position 467 (serine 467) is a Phosphoserine. A Phosphothreonine; by PKC modification is found at threonine 471. Polar residues predominate over residues leucine 502 to histidine 520.

The protein in the C-terminal section; belongs to the phosphoglycerate mutase family. Homodimer. Forms a heterodimer with PFKFB2. Phosphorylation by AMPK stimulates activity. Ubiquitous.

The catalysed reaction is beta-D-fructose 2,6-bisphosphate + H2O = beta-D-fructose 6-phosphate + phosphate. It catalyses the reaction beta-D-fructose 6-phosphate + ATP = beta-D-fructose 2,6-bisphosphate + ADP + H(+). Catalyzes both the synthesis and degradation of fructose 2,6-bisphosphate. The sequence is that of 6-phosphofructo-2-kinase/fructose-2,6-bisphosphatase 3 (PFKFB3) from Homo sapiens (Human).